The chain runs to 340 residues: tRNA (cytosine(34)-C(5))-methyltransferase, mitochondrial (340 aa).

Residues 139 to 145, E162, D193, and D211 each bind S-adenosyl-L-methionine; that span reads CAAPGGK. C265 acts as the Nucleophile in catalysis.

This sequence belongs to the class I-like SAM-binding methyltransferase superfamily. RsmB/NOP family.

It is found in the mitochondrion matrix. It catalyses the reaction cytidine(34) in mitochondrial tRNA + S-adenosyl-L-methionine = 5-methylcytidine(34) in mitochondrial tRNA + S-adenosyl-L-homocysteine + H(+). Functionally, mitochondrial tRNA methyltransferase that mediates methylation of cytosine to 5-methylcytosine (m5C) at position 34 of mt-tRNA(Met). mt-tRNA(Met) methylation at cytosine(34) takes place at the wobble position of the anticodon and initiates the formation of 5-formylcytosine (f(5)c) at this position. mt-tRNA(Met) containing the f(5)c modification at the wobble position enables recognition of the AUA codon in addition to the AUG codon, expanding codon recognition in mitochondrial translation. This chain is tRNA (cytosine(34)-C(5))-methyltransferase, mitochondrial, found in Homo sapiens (Human).